A 181-amino-acid chain; its full sequence is ATP-dependent protease subunit HslV (181 aa).

Threonine 7 is an active-site residue. Residues glycine 164, cysteine 167, and threonine 170 each coordinate Na(+).

This sequence belongs to the peptidase T1B family. HslV subfamily. In terms of assembly, a double ring-shaped homohexamer of HslV is capped on each side by a ring-shaped HslU homohexamer. The assembly of the HslU/HslV complex is dependent on binding of ATP.

The protein resides in the cytoplasm. The enzyme catalyses ATP-dependent cleavage of peptide bonds with broad specificity.. Allosterically activated by HslU binding. Its function is as follows. Protease subunit of a proteasome-like degradation complex believed to be a general protein degrading machinery. This chain is ATP-dependent protease subunit HslV, found in Shouchella clausii (strain KSM-K16) (Alkalihalobacillus clausii).